A 654-amino-acid chain; its full sequence is Amyloid beta precursor like protein 1 (654 aa).

The first 38 residues, 1 to 38 (MGPTSPAARGQGRRWRPPPLPLLLPLSLLLLRAQLAVG), serve as a signal peptide directing secretion. The Extracellular segment spans residues 39–584 (NLAVGSPSAA…APSGTGVSRE (546 aa)). Positions 50–146 (APGSAQVAGL…PFHCLPGEFV (97 aa)) are GFLD subdomain. An E1 domain is found at 50 to 212 (APGSAQVAGL…RGVEYVCCPP (163 aa)). 6 cysteine pairs are disulfide-bonded: cysteine 60-cysteine 84, cysteine 95-cysteine 140, cysteine 120-cysteine 128, cysteine 156-cysteine 210, cysteine 167-cysteine 197, and cysteine 181-cysteine 209. The interval 154–212 (EGCRFLHQERMDQCESSTRRHQEAQEACSSQGLILHGSGMLLPCGSDRFRGVEYVCCPP) is cuBD subdomain. Histidine 174 is a Cu(2+) binding site. Residues glutamate 206, cysteine 209, and cysteine 210 each coordinate Zn(2+). A disordered region spans residues 214–297 (ATPNPSGMAA…VTPTPRPTDG (84 aa)). Positions 262-272 (QAEEEEEEEEE) are enriched in acidic residues. In terms of domain architecture, E2 spans 297–488 (GVDVYFGMPG…QELRPQIQEL (192 aa)). Heparin-binding stretches follow at residues 314–346 (FLRA…SKNL) and 414–445 (LMAL…DPEK). The interval 446-463 (AQQMRFQVQTHLQVIEER) is collagen-binding. Residue asparagine 465 is glycosylated (N-linked (GlcNAc...) asparagine). Residues 497 to 580 (SELDASVPGS…RDELAPSGTG (84 aa)) are disordered. A compositionally biased stretch (basic and acidic residues) spans 508 to 523 (SEDKGSLQPPESKDDP). Polar residues predominate over residues 529-539 (KGSTDQESSSS). Asparagine 555 carries an N-linked (GlcNAc...) asparagine glycan. Histidine 565 lines the Cu(2+) pocket. Histidine 565 provides a ligand contact to Zn(2+). A helical membrane pass occupies residues 585-607 (ALSGLLIMGAGGGSLIVLSLLLL). The short motif at 608-619 (RKKKPYGTISHG) is the Basolateral sorting signal element. Residues 608-654 (RKKKPYGTISHGVVEVDPMLTLEEQQLRELQRHGYENPTYRFLEERP) lie on the Cytoplasmic side of the membrane. Residues 636-652 (ELQRHGYENPTYRFLEE) are interaction with DAB1. An interaction with DAB2 region spans residues 640 to 654 (HGYENPTYRFLEERP). The short motif at 644–647 (NPTY) is the NPXY motif; contains endocytosis signal element.

This sequence belongs to the APP family. In terms of assembly, monomer and homodimer. Heparin binding promotes homodimerization. Binds, via its C-terminus, to the PID domain of several cytoplasmic proteins, including APBB and APBA family members, MAPK8IP1 and DAB1. Binding to Dab1 inhibits its serine phosphorylation. Interacts with CPEB1. Interacts (via NPXY motif) with DAB2 (via PID domain); the interaction is impaired by tyrosine phosphorylation of the NPXY motif. Interacts (via NPXY motif) with DAB1. In terms of processing, proteolytically cleaved by caspases during neuronal apoptosis. Cleaved, in vitro, at Asp-624 by caspase-3. N- and O-glycosylated.

The protein resides in the cell membrane. The protein localises to the cytoplasm. Its function is as follows. May play a role in postsynaptic function. The C-terminal gamma-secretase processed fragment, ALID1, activates transcription activation through APBB1 (Fe65) binding. Couples to JIP signal transduction through C-terminal binding. May interact with cellular G-protein signaling pathways. Can regulate neurite outgrowth through binding to components of the extracellular matrix such as heparin and collagen I. The gamma-CTF peptide, C30, is a potent enhancer of neuronal apoptosis. This chain is Amyloid beta precursor like protein 1 (Aplp1), found in Mus musculus (Mouse).